The chain runs to 579 residues: Thiol:disulfide interchange protein DsbD (579 aa).

An N-terminal signal peptide occupies residues 1 to 16; that stretch reads MKKLFLFFTLIFTAFA. 2 cysteine pairs are disulfide-bonded: Cys124-Cys129 and Cys193-Cys315. A run of 8 helical transmembrane segments spans residues 178–198, 230–250, 254–274, 296–316, 337–357, 376–396, 397–417, and 420–440; these read IFGF…LPML, LTYT…QIAL, YVMI…FGLF, GAFG…SPCT, AATL…ITLF, FGFV…PEVW, EPRL…LQMS, and GFGY…VQPL. A Thioredoxin domain is found at 449-579; that stretch reads TTTQSAVENM…AFSNWLKALH (131 aa). An intrachain disulfide couples Cys495 to Cys498.

The protein belongs to the thioredoxin family. DsbD subfamily.

The protein resides in the cell inner membrane. It catalyses the reaction [protein]-dithiol + NAD(+) = [protein]-disulfide + NADH + H(+). It carries out the reaction [protein]-dithiol + NADP(+) = [protein]-disulfide + NADPH + H(+). Required to facilitate the formation of correct disulfide bonds in some periplasmic proteins and for the assembly of the periplasmic c-type cytochromes. Acts by transferring electrons from cytoplasmic thioredoxin to the periplasm. This transfer involves a cascade of disulfide bond formation and reduction steps. The chain is Thiol:disulfide interchange protein DsbD from Haemophilus influenzae (strain 86-028NP).